Here is a 517-residue protein sequence, read N- to C-terminus: BTB/POZ domain-containing protein At3g49900 (517 aa).

The segment covering 28–37 (SSSSSSLSLS) has biased composition (low complexity). The interval 28-49 (SSSSSSLSLSPKQPINLSSSPS) is disordered. The segment covering 38–49 (PKQPINLSSSPS) has biased composition (polar residues). The BTB domain occupies 67-130 (PDVFVNVGGT…CYGAHIELTP (64 aa)). Residues 224–307 (LPAGDFNVVA…VRAMLQEQLN (84 aa)) form the NPH3 domain. Residues 409 to 456 (ARSASFHCVHQPSNVNKTQRGDRGSVSNLSTTYRRRRASPPQAQPQKS) form a disordered region.

This sequence belongs to the NPH3 family.

It participates in protein modification; protein ubiquitination. Its function is as follows. May act as a substrate-specific adapter of an E3 ubiquitin-protein ligase complex (CUL3-RBX1-BTB) which mediates the ubiquitination and subsequent proteasomal degradation of target proteins. This chain is BTB/POZ domain-containing protein At3g49900, found in Arabidopsis thaliana (Mouse-ear cress).